Consider the following 115-residue polypeptide: Nucleoid-associated protein PMN2A_1347 (115 aa).

The tract at residues 89-115 (STSTMKERMEDLTGGFKLNLPGMGEEN) is disordered.

Belongs to the YbaB/EbfC family. Homodimer.

The protein resides in the cytoplasm. It is found in the nucleoid. Binds to DNA and alters its conformation. May be involved in regulation of gene expression, nucleoid organization and DNA protection. This is Nucleoid-associated protein PMN2A_1347 from Prochlorococcus marinus (strain NATL2A).